The chain runs to 66 residues: Alpha-like toxin BmK-M7 (66 aa).

The region spanning 2–64 is the LCN-type CS-alpha/beta domain; the sequence is RDGYIALPHN…VPIRVPGRCH (63 aa). Cystine bridges form between C12–C63, C16–C36, C22–C46, and C26–C48.

Belongs to the long (4 C-C) scorpion toxin superfamily. Sodium channel inhibitor family. Alpha subfamily. Expressed by the venom gland.

Its subcellular location is the secreted. Alpha toxins bind voltage-independently at site-3 of sodium channels (Nav) and inhibit the inactivation of the activated channels, thereby blocking neuronal transmission. This toxin is active on both mammals and insects. It can be considered as a cardiotoxin, as it can bind to human cardiac sodium channel and modify its normal properties. In Olivierus martensii (Manchurian scorpion), this protein is Alpha-like toxin BmK-M7.